The chain runs to 72 residues: Metallothionein-like protein type 2 A (72 aa).

The protein belongs to the metallothionein superfamily. Type 15 family. Leaves and roots.

Metallothioneins have a high content of cysteine residues that bind various heavy metals. This is Metallothionein-like protein type 2 A (MTA) from Solanum lycopersicum (Tomato).